We begin with the raw amino-acid sequence, 370 residues long: NSFL1 cofactor p47 (370 aa).

The disordered stretch occupies residues 54 to 73 (SQATPSSVSRGTAPSDNRVT). A phosphoserine mark is found at S74, S102, and S114. Disordered stretches follow at residues 80 to 116 (HDQD…KSPN) and 138 to 157 (TKSP…GYRL). A Nuclear localization signal motif is present at residues 109–115 (PPRKKSP). Phosphoserine; by CDK1 is present on S140. Y167 bears the Phosphotyrosine mark. Positions 172–175 (RRRH) match the Nuclear localization signal motif. S176, S192, and S272 each carry phosphoserine. Residues 179 to 244 (DVHVVLKLWK…MEDHRDEDFV (66 aa)) enclose the SEP domain. The UBX domain occupies 291–368 (EAEPTTNIQI…NLLNAVIVQR (78 aa)).

Belongs to the NSFL1C family. As to quaternary structure, part of a ternary complex containing STX5A, NSFL1C and VCP. NSFL1C forms a homotrimer that binds to one end of a VCP homohexamer. The complex binds to membranes enriched in phosphatidylethanolamine-containing lipids and promotes Golgi membrane fusion. Interaction with VCIP135 leads to dissociation of the complex via ATP hydrolysis by VCP. Binds ubiquitin and mono-ubiquitinated proteins via its N-terminal UBA-like domain when bound to VCP. In terms of processing, phosphorylated during mitosis. Phosphorylation inhibits interaction with Golgi membranes and is required for the fragmentation of the Golgi stacks during mitosis. In terms of tissue distribution, highly expressed in heart, brain, spleen, lung, liver, muscle, kidney and testis.

Its subcellular location is the nucleus. It is found in the golgi apparatus. It localises to the golgi stack. The protein resides in the chromosome. The protein localises to the cytoplasm. Its subcellular location is the cytoskeleton. It is found in the microtubule organizing center. It localises to the centrosome. Reduces the ATPase activity of VCP. Necessary for the fragmentation of Golgi stacks during mitosis and for VCP-mediated reassembly of Golgi stacks after mitosis. May play a role in VCP-mediated formation of transitional endoplasmic reticulum (tER). Inhibits the activity of CTSL (in vitro). Together with UBXN2B/p37, regulates the centrosomal levels of kinase AURKA/Aurora A during mitotic progression by promoting AURKA removal from centrosomes in prophase. Also, regulates spindle orientation during mitosis. The sequence is that of NSFL1 cofactor p47 (Nsfl1c) from Rattus norvegicus (Rat).